A 455-amino-acid polypeptide reads, in one-letter code: UDP-N-acetylmuramoylalanine--D-glutamate ligase (455 aa).

118 to 124 (GTNGKST) is a binding site for ATP.

Belongs to the MurCDEF family.

It is found in the cytoplasm. The catalysed reaction is UDP-N-acetyl-alpha-D-muramoyl-L-alanine + D-glutamate + ATP = UDP-N-acetyl-alpha-D-muramoyl-L-alanyl-D-glutamate + ADP + phosphate + H(+). It participates in cell wall biogenesis; peptidoglycan biosynthesis. In terms of biological role, cell wall formation. Catalyzes the addition of glutamate to the nucleotide precursor UDP-N-acetylmuramoyl-L-alanine (UMA). The sequence is that of UDP-N-acetylmuramoylalanine--D-glutamate ligase from Myxococcus xanthus (strain DK1622).